A 403-amino-acid chain; its full sequence is Signal-transducing adaptor protein 2 (403 aa).

The PH domain maps to 18 to 130; the sequence is PSHYYESFLE…VPTDLTLLPG (113 aa). Position 22 is a phosphotyrosine; by SRC (Tyr22). The region spanning 133–248 is the SH2 domain; the sequence is YMMSEVLAKE…KALVPFLLDE (116 aa). Tyr250 carries the phosphotyrosine; by PTK6 modification. Residues 270–308 are disordered; the sequence is APSAPGPGPAPCTGGPKPLSPASSQDKLPPLPPLPNQEE. Tyr310 carries the post-translational modification Phosphotyrosine. Phosphotyrosine; by SRC is present on Tyr322. Positions 331–374 are disordered; that stretch reads SWPVILKPKKLPKPPAKLPKPPVGPKPEPKVFNGGLGRKLPVSS. Positions 343–356 are enriched in pro residues; it reads KPPAKLPKPPVGPK. A coiled-coil region spans residues 382 to 402; it reads AGLADMTAELQKKLEKRRALE.

In terms of assembly, interacts with PTK6 and CSF1R. Phosphorylated on tyrosine. Tyr-250 may be important for interaction with kinases. Phosphorylated by PTK6 at Tyr-250 modulates PTK6-mediated STAT3 activation. Tyr-22 and Tyr-322 appears to be phosphorylated by SRC. As to expression, widely expressed.

The protein localises to the cytoplasm. Functionally, substrate of protein kinase PTK6. May play a regulatory role in the acute-phase response in systemic inflammation and may modulate STAT3 activity. The protein is Signal-transducing adaptor protein 2 (STAP2) of Homo sapiens (Human).